The sequence spans 540 residues: Mitochondrial distribution and morphology protein 34 (540 aa).

Residues 1–208 form the SMP-LTD domain; it reads MSFKFNSGTF…LPSVIFNMSQ (208 aa). Disordered stretches follow at residues 26–51 and 379–399; these read ALNP…KKPK and RSKS…SGSL. A compositionally biased stretch (polar residues) spans 35–44; the sequence is PESTSGQDGS.

This sequence belongs to the MDM34 family. As to quaternary structure, component of the ER-mitochondria encounter structure (ERMES) or MDM complex, composed of MMM1, MDM10, MDM12 and MDM34.

It is found in the mitochondrion outer membrane. In terms of biological role, component of the ERMES/MDM complex, which serves as a molecular tether to connect the endoplasmic reticulum (ER) and mitochondria. Components of this complex are involved in the control of mitochondrial shape and protein biogenesis, and function in nonvesicular lipid trafficking between the ER and mitochondria. MDM34 is required for the interaction of the ER-resident membrane protein MMM1 and the outer mitochondrial membrane-resident beta-barrel protein MDM10. This Kluyveromyces lactis (strain ATCC 8585 / CBS 2359 / DSM 70799 / NBRC 1267 / NRRL Y-1140 / WM37) (Yeast) protein is Mitochondrial distribution and morphology protein 34.